The sequence spans 494 residues: Glutamyl-tRNA(Gln) amidotransferase subunit A (494 aa).

Catalysis depends on charge relay system residues Lys-80 and Ser-155. The Acyl-ester intermediate role is filled by Ser-179.

Belongs to the amidase family. GatA subfamily. In terms of assembly, heterotrimer of A, B and C subunits.

The catalysed reaction is L-glutamyl-tRNA(Gln) + L-glutamine + ATP + H2O = L-glutaminyl-tRNA(Gln) + L-glutamate + ADP + phosphate + H(+). In terms of biological role, allows the formation of correctly charged Gln-tRNA(Gln) through the transamidation of misacylated Glu-tRNA(Gln) in organisms which lack glutaminyl-tRNA synthetase. The reaction takes place in the presence of glutamine and ATP through an activated gamma-phospho-Glu-tRNA(Gln). In Lachnoclostridium phytofermentans (strain ATCC 700394 / DSM 18823 / ISDg) (Clostridium phytofermentans), this protein is Glutamyl-tRNA(Gln) amidotransferase subunit A.